A 406-amino-acid polypeptide reads, in one-letter code: Immediate early response gene 5-like protein (406 aa).

2 disordered regions span residues 166–195 and 216–235; these read QPPH…APAA and AAPS…PSSS. Residues 182-193 are compositionally biased toward pro residues; that stretch reads QPGPAPLPPPAP.

The protein belongs to the IER family.

The polypeptide is Immediate early response gene 5-like protein (Ier5l) (Mus musculus (Mouse)).